The sequence spans 1291 residues: Vigilin 1 (1291 aa).

Over residues 1 to 39 the composition is skewed to polar residues; sequence MEHLSNLEQPTTMDSYDFQKLTNDENLQGTESQVPSGSK. Disordered regions lie at residues 1–45 and 70–91; these read MEHL…STNG and HENA…KPAI. The span at 73–88 shows a compositional bias: low complexity; that stretch reads AQQGKKQNNSKSFSKK. S115 carries the post-translational modification Phosphoserine. The disordered stretch occupies residues 124–148; that stretch reads TSVAGSDSVSRDKIPFSASSRASST. 12 KH domains span residues 166-229, 236-328, 339-405, 416-486, 575-644, 658-726, 741-798, 808-883, 894-957, 967-1040, 1050-1114, and 1219-1280; these read ILSP…RRQI, RETK…QKDI, TTVR…ALYL, TIPT…NSTI, SKFY…LADL, IVSE…VSEI, SHVE…AARI, DTIL…KQEL, AYTS…IKEI, LVEK…ETRL, QVEE…KEMI, and NCIA…KDLI. The interval 266–303 is disordered; the sequence is TSTRIQIPKRNNTANESSDDAKKPEKEENSAASTLDDL. Positions 268–281 are enriched in polar residues; the sequence is TRIQIPKRNNTANE. Positions 284–294 are enriched in basic and acidic residues; that stretch reads DDAKKPEKEEN. Residues 845-865 form a disordered region; that stretch reads PREDDSSNSTGNELMKPTSPD. S934 carries the post-translational modification Phosphoserine. T935 carries the post-translational modification Phosphothreonine.

The protein resides in the endoplasmic reticulum. The protein localises to the cytoplasm. Functionally, required for cell survival under thermal stress. This is Vigilin 1 (vgl1) from Schizosaccharomyces pombe (strain 972 / ATCC 24843) (Fission yeast).